Here is a 467-residue protein sequence, read N- to C-terminus: Putative gluconeogenesis factor (467 aa).

Positions 1–12 (MSAPPAPPPDRS) are enriched in pro residues. The disordered stretch occupies residues 1–27 (MSAPPAPPPDRSAPPDRTDSAQTEPTR).

This sequence belongs to the gluconeogenesis factor family.

The protein localises to the cytoplasm. In terms of biological role, required for morphogenesis under gluconeogenic growth conditions. The sequence is that of Putative gluconeogenesis factor from Deinococcus radiodurans (strain ATCC 13939 / DSM 20539 / JCM 16871 / CCUG 27074 / LMG 4051 / NBRC 15346 / NCIMB 9279 / VKM B-1422 / R1).